The sequence spans 348 residues: Myricetin O-methyltransferase (348 aa).

At Met-1 the chain carries N-acetylmethionine. The S-adenosyl-L-methionine site is built by Gly-189, Asp-212, Asp-232, Met-233, and Lys-246. His-250 functions as the Proton acceptor in the catalytic mechanism.

The N-terminus is blocked.

It carries out the reaction S-adenosyl-L-methionine + a 3'-hydroxyflavonoid = S-adenosyl-L-homocysteine + a 3'-methoxyflavonoid.. It catalyses the reaction S-adenosyl-L-methionine + a 5'-hydroxy-3'-methoxyflavonoid = S-adenosyl-L-homocysteine + a 3',5'-dimethoxyflavonoid.. Methylates myricetin and dihydromyricetin at 2 sites. Inactive towards 16-hydroxytabersonine, the phenylpropanoids 5-hydroxyferulate, caffeate and their CoA-esters, flavones and flavanones possessing 2 or 3 B-ring hydroxyl groups. The protein is Myricetin O-methyltransferase of Catharanthus roseus (Madagascar periwinkle).